The primary structure comprises 902 residues: Tiger protein B1 (902 aa).

The first 24 residues, 1–24 (MKVIYIYLLLLLVCKFLFVKSSCS), serve as a signal peptide directing secretion. Residues 25–803 (LKVGKIECTK…IIYSENKSTG (779 aa)) lie on the Extracellular side of the membrane. Residues Asn-43, Asn-144, Asn-184, Asn-223, Asn-272, Asn-279, Asn-288, Asn-358, Asn-389, Asn-398, Asn-437, Asn-559, Asn-628, Asn-644, Asn-706, Asn-753, Asn-764, Asn-771, and Asn-799 are each glycosylated (N-linked (GlcNAc...) asparagine). In terms of domain architecture, IPT/TIG 1 spans 249-323 (MEGVLNDNGG…ITIDGEYKSN (75 aa)). 2 IPT/TIG domains span residues 603–680 (PIIE…ISSS) and 704–788 (ITNT…IFQF). A helical transmembrane segment spans residues 804–824 (FPNEMYLGFVVFVIFIALISF). Residues 825-902 (AAKNQIEKYF…IRRCFKEHTD (78 aa)) lie on the Cytoplasmic side of the membrane.

It is found in the cell membrane. In terms of biological role, tgrB1 and tgrC1 are involved in kin discrimination. They play an essential role in aggregation and subsequent development. The polypeptide is Tiger protein B1 (tgrB1) (Dictyostelium discoideum (Social amoeba)).